Consider the following 316-residue polypeptide: Pantothenate kinase (316 aa).

95-102 (GSVAVGKS) is an ATP binding site.

This sequence belongs to the prokaryotic pantothenate kinase family.

The protein resides in the cytoplasm. The catalysed reaction is (R)-pantothenate + ATP = (R)-4'-phosphopantothenate + ADP + H(+). It functions in the pathway cofactor biosynthesis; coenzyme A biosynthesis; CoA from (R)-pantothenate: step 1/5. The sequence is that of Pantothenate kinase from Photorhabdus laumondii subsp. laumondii (strain DSM 15139 / CIP 105565 / TT01) (Photorhabdus luminescens subsp. laumondii).